The primary structure comprises 246 residues: uncharacterized protein (246 aa).

The tract at residues 120–149 (EKCAGETSPYTSASVSNSKKATSSSNFTKS) is disordered. Residues 130 to 149 (TSASVSNSKKATSSSNFTKS) show a composition bias toward low complexity.

This is an uncharacterized protein from Caenorhabditis elegans.